A 172-amino-acid polypeptide reads, in one-letter code: L-amino acid N-acyltransferase MnaT (172 aa).

In terms of domain architecture, N-acetyltransferase spans 1–163 (MSIRFARKAD…DLTFMQLQLD (163 aa)). Residues 85–87 (VYV), 93–98 (GKGLGR), Asn-124, and Ser-133 contribute to the acetyl-CoA site.

It belongs to the acetyltransferase family. PAT/BAR subfamily.

It catalyses the reaction L-methionine + acetyl-CoA = N-acetyl-L-methionine + CoA + H(+). It carries out the reaction propanoyl-CoA + L-methionine = N-propanoyl-L-methioninate + CoA + H(+). The enzyme catalyses L-alpha-phenylglycine + acetyl-CoA = N-acetyl-L-alpha-phenylglycine + CoA + H(+). The catalysed reaction is L-methionine sulfoximine + acetyl-CoA = N-acetyl-L-methionine sulfoximine + CoA + H(+). It catalyses the reaction L-methionine sulfone + acetyl-CoA = N-acetyl-L-methionine sulfone + CoA + H(+). Its function is as follows. Acyltransferase that appears to be required for E.coli optimal growth rate and yield via the formation of N-acetylated amino acids. Catalyzes the acylation of L-methionine using acetyl-CoA or propanoyl-CoA as acyl donors, and the acetylation of L-phenylglycine. Is also able to N-acylate other free L-amino acids and their derivatives using a CoA thioester as cosubstrate. Using acetyl-CoA as an acyl donor, substrate specificity is methionine sulfone &gt; methionine sulfoximine &gt; methionine sulfoxide &gt; methionine. Asparagine, lysine, glutamine, aspartate and glutamate are very poor substrates. Using methionine as a substrate, acyl donor preference is propanoyl-CoA &gt; acetyl-CoA &gt;&gt; butyryl-CoA. Likely plays a role in the resistance against the toxic effects of L-methionine sulfoximine (MSX), via its ability to catalyze its acetylation; MSX is a rare amino acid which inhibits glutamine synthetase (GlnA). This is L-amino acid N-acyltransferase MnaT from Escherichia coli (strain K12).